Consider the following 357-residue polypeptide: Heat-inducible transcription repressor HrcA (357 aa).

Belongs to the HrcA family.

Negative regulator of class I heat shock genes (grpE-dnaK-dnaJ and groELS operons). Prevents heat-shock induction of these operons. This is Heat-inducible transcription repressor HrcA from Chlorobium limicola (strain DSM 245 / NBRC 103803 / 6330).